A 243-amino-acid chain; its full sequence is Small ribosomal subunit protein uS3 (243 aa).

N-acetylalanine is present on Ala-2. Ser-6 and Ser-35 each carry phosphoserine. The 72-residue stretch at 21 to 92 folds into the KH type-2 domain; that stretch reads LNEFLTRELA…SVELYAEKVA (72 aa). Thr-42 carries the phosphothreonine modification. N6-acetyllysine is present on Lys-62. Arg-64, Arg-65, and Arg-67 each carry asymmetric dimethylarginine. The residue at position 70 (Thr-70) is a Phosphothreonine. Lys-90 is covalently cross-linked (Glycyl lysine isopeptide (Lys-Gly) (interchain with G-Cter in ubiquitin)). Residue Ser-104 is modified to Phosphoserine. Lys-132 bears the N6-succinyllysine mark. The tract at residues 200 to 243 is disordered; sequence PKKPLPDHVSIVEPKDEILPTTPISEQKGGKPEPPAMPQPVPTA. Lys-202 participates in a covalent cross-link: Glycyl lysine isopeptide (Lys-Gly) (interchain with G-Cter in ubiquitin). The residue at position 209 (Ser-209) is a Phosphoserine. Lys-214 is covalently cross-linked (Glycyl lysine isopeptide (Lys-Gly) (interchain with G-Cter in SUMO2); alternate). A Glycyl lysine isopeptide (Lys-Gly) (interchain with G-Cter in ubiquitin); alternate cross-link involves residue Lys-214. Residues Thr-220 and Thr-221 each carry the phosphothreonine modification. Ser-224 bears the Phosphoserine mark. Lys-230 is covalently cross-linked (Glycyl lysine isopeptide (Lys-Gly) (interchain with G-Cter in SUMO2)). Residues 231–243 are compositionally biased toward pro residues; it reads PEPPAMPQPVPTA. Thr-242 carries the phosphothreonine modification.

It belongs to the universal ribosomal protein uS3 family. As to quaternary structure, component of the 40S small ribosomal subunit. Identified in a IGF2BP1-dependent mRNP granule complex containing untranslated mRNAs. Interacts with HNRPD. Interacts with PRMT1; the interaction methylates RPS3. Interacts with SUMO1; the interaction sumoylates RPS3. Interacts with UBC9. Interacts with CDK1; the interaction phosphorylates RPS3. Interacts with PRKCD; the interaction phosphorylates RPS3. Interacts with PKB/AKT; the interaction phosphorylates RPS3. Interacts with E2F1; the interaction occurs in the absence of nerve growth factor and increases transcription of pro-apoptotic proteins BCL2L11/BIM and HRK/Dp5. Interacts with the base excision repair proteins APEX1 and OGG1; interaction with OGG1 increases OGG1 N-glycosylase activity. Interacts with UNG; the interaction increases the uracil excision activity of UNG1. Interacts with HSP90; the interaction prevents the ubiquitination and proteasome-dependent degradation of RPS3 and is suppressed by increased ROS levels. Interacts with TOM70; the interaction promotes translocation of RPS3 to the mitochondrion. Interacts (via N-terminus) with RELA (via N-terminus); the interaction enhances the DNA-binding activity of the NF-kappa-B p65-p50 complex. Interacts with NFKBIA; the interaction is direct and may bridge the interaction between RPS3 and RELA. Interacts with IKKB; the interaction phosphorylates RPS3 and enhances its translocation to the nucleus. Interacts (via KH domain) with MDM2 and TP53. Interacts with TRADD. Interacts with ASCC3. Identified in a HCV IRES-mediated translation complex, at least composed of EIF3C, IGF2BP1, RPS3 and HCV RNA-replicon. Interacts with CRY1. In terms of processing, methylation by PRMT1 is required for import into the nucleolus and for ribosome assembly. Sumoylation by SUMO1 enhances protein stability through increased resistance to proteolysis. Sumoylation occurs at one or more of the three consensus sites, Lys-18, Lys-214 and Lys-230. Post-translationally, phosphorylation at Thr-221 by CDK1 occurs mainly in G2/M phase. Phosphorylation by PRKCD occurs on a non-ribosomal-associated form which results in translocation of RPS3 to the nucleus and enhances its endonuclease activity. Phosphorylated on Ser-209 by IKKB in response to activation of the NF-kappa-B p65-p50 complex which enhances the association of RPS3 with importin-alpha and mediates the nuclear translocation of RPS3. Phosphorylation by MAPK is required for translocation to the nucleus following exposure of cells to DNA damaging agents such as hydrogen peroxide. Phosphorylation by PKB/AKT mediates RPS3 nuclear translocation, enhances RPS3 endonuclease activity and suppresses RPS3-induced neuronal apoptosis. In terms of processing, ubiquitinated; ubiquitination is prevented by interaction with HSP90 which stabilizes the protein. Monoubiquitinated at Lys-214 by RNF10 and ZNF598 when a ribosome has stalled during translation of poly(A) sequences, leading to preclude synthesis of a long poly-lysine tail and initiate the ribosome quality control (RQC) pathway to degrade the potentially detrimental aberrant nascent polypeptide. Deubiquitinated at Lys-214 by USP10, preventing degradation by the proteasome and promoting 40S ribosome subunit recycling following ribosome dissociation. Ufmylated by UFL1.

The protein localises to the cytoplasm. It is found in the nucleus. It localises to the nucleolus. Its subcellular location is the mitochondrion inner membrane. The protein resides in the cytoskeleton. The protein localises to the spindle. The catalysed reaction is 2'-deoxyribonucleotide-(2'-deoxyribose 5'-phosphate)-2'-deoxyribonucleotide-DNA = a 3'-end 2'-deoxyribonucleotide-(2,3-dehydro-2,3-deoxyribose 5'-phosphate)-DNA + a 5'-end 5'-phospho-2'-deoxyribonucleoside-DNA + H(+). With respect to regulation, endonuclease activity is inhibited by MgCl2 on apurinic/apyrimidinic DNA but not on UV-irradiated DNA. Functionally, component of the small ribosomal subunit. The ribosome is a large ribonucleoprotein complex responsible for the synthesis of proteins in the cell. Has endonuclease activity and plays a role in repair of damaged DNA. Cleaves phosphodiester bonds of DNAs containing altered bases with broad specificity and cleaves supercoiled DNA more efficiently than relaxed DNA. Displays high binding affinity for 7,8-dihydro-8-oxoguanine (8-oxoG), a common DNA lesion caused by reactive oxygen species (ROS). Has also been shown to bind with similar affinity to intact and damaged DNA. Stimulates the N-glycosylase activity of the base excision protein OGG1. Enhances the uracil excision activity of UNG1. Also stimulates the cleavage of the phosphodiester backbone by APEX1. When located in the mitochondrion, reduces cellular ROS levels and mitochondrial DNA damage. Has also been shown to negatively regulate DNA repair in cells exposed to hydrogen peroxide. Plays a role in regulating transcription as part of the NF-kappa-B p65-p50 complex where it binds to the RELA/p65 subunit, enhances binding of the complex to DNA and promotes transcription of target genes. Represses its own translation by binding to its cognate mRNA. Binds to and protects TP53/p53 from MDM2-mediated ubiquitination. Involved in spindle formation and chromosome movement during mitosis by regulating microtubule polymerization. Involved in induction of apoptosis through its role in activation of CASP8. Induces neuronal apoptosis by interacting with the E2F1 transcription factor and acting synergistically with it to up-regulate pro-apoptotic proteins BCL2L11/BIM and HRK/Dp5. Interacts with TRADD following exposure to UV radiation and induces apoptosis by caspase-dependent JNK activation. This Oryctolagus cuniculus (Rabbit) protein is Small ribosomal subunit protein uS3 (RPS3).